The primary structure comprises 311 residues: tRNA-cytidine(32) 2-sulfurtransferase (311 aa).

Positions 47–52 (SGGKDS) match the PP-loop motif motif. Residues Cys-122, Cys-125, and Cys-213 each contribute to the [4Fe-4S] cluster site.

This sequence belongs to the TtcA family. Homodimer. The cofactor is Mg(2+). Requires [4Fe-4S] cluster as cofactor.

The protein resides in the cytoplasm. It catalyses the reaction cytidine(32) in tRNA + S-sulfanyl-L-cysteinyl-[cysteine desulfurase] + AH2 + ATP = 2-thiocytidine(32) in tRNA + L-cysteinyl-[cysteine desulfurase] + A + AMP + diphosphate + H(+). The protein operates within tRNA modification. Functionally, catalyzes the ATP-dependent 2-thiolation of cytidine in position 32 of tRNA, to form 2-thiocytidine (s(2)C32). The sulfur atoms are provided by the cysteine/cysteine desulfurase (IscS) system. The sequence is that of tRNA-cytidine(32) 2-sulfurtransferase from Salmonella dublin (strain CT_02021853).